A 325-amino-acid polypeptide reads, in one-letter code: Phospho-N-acetylmuramoyl-pentapeptide-transferase (325 aa).

Helical transmembrane passes span 9-29 (ALLVSFFVALGGGRVLIPWLL), 53-73 (TMGGIIFLLSLVVTVVVFQAF), 77-97 (TLLLLITTLLFGLLGFLDDYL), 112-132 (KLLGQVIFSLVLTFGAVAFLG), 154-174 (LGNVFFFAATIFIMVGFANAV), 182-202 (GLCSSVTLIVMSFFAMTSLAL), 204-224 (EKGLFIFALALMGGLVGFLVY), 231-251 (VFMGDTGSLALGAAVAGFAVL), 257-277 (FLLLVGLIYVVETLSVIIQVI), and 305-325 (KIVLVFSLVTLIMVLISGYGL).

It belongs to the glycosyltransferase 4 family. MraY subfamily. Mg(2+) serves as cofactor.

The protein resides in the cell membrane. It catalyses the reaction UDP-N-acetyl-alpha-D-muramoyl-L-alanyl-gamma-D-glutamyl-meso-2,6-diaminopimeloyl-D-alanyl-D-alanine + di-trans,octa-cis-undecaprenyl phosphate = di-trans,octa-cis-undecaprenyl diphospho-N-acetyl-alpha-D-muramoyl-L-alanyl-D-glutamyl-meso-2,6-diaminopimeloyl-D-alanyl-D-alanine + UMP. The protein operates within cell wall biogenesis; peptidoglycan biosynthesis. In terms of biological role, catalyzes the initial step of the lipid cycle reactions in the biosynthesis of the cell wall peptidoglycan: transfers peptidoglycan precursor phospho-MurNAc-pentapeptide from UDP-MurNAc-pentapeptide onto the lipid carrier undecaprenyl phosphate, yielding undecaprenyl-pyrophosphoryl-MurNAc-pentapeptide, known as lipid I. In Carboxydothermus hydrogenoformans (strain ATCC BAA-161 / DSM 6008 / Z-2901), this protein is Phospho-N-acetylmuramoyl-pentapeptide-transferase.